The chain runs to 360 residues: MQTLHVELGERRYPIFIGSQLDPKQLLEPYIHGQQVMIVSNVTVAPLYLSHYQEALESLGKTVATCILPDGEKYKDIQHLNLIFDALLEAGFNRDCTVLALGGGVIGDMAGFASACFQRGVYFVQVPTTLLSQVDSSVGGKTGINHPLGKNMLGAFQQPQVVLADMAQLNTLPERELSAGLAEVIKYALLGDEDFLVWLEENMDGLVARDADLLAEAVYRSCAHKARIVANDEKEQGERALLNLGHTFGHAIESYLGYGTWLHGEAVATGMVMAADLSQRLGWISNEDVARTKKIIQRANLPISCPQIPLDDFLGYMAHDKKVLNGQLRLVLLKQLGQAVITKDFDVELMKQAILANQHG.

Residues 70–75, 104–108, 128–129, lysine 141, and lysine 150 each bind NAD(+); these read DGEKYK, GVIGD, and TT. Zn(2+)-binding residues include glutamate 183, histidine 246, and histidine 263.

This sequence belongs to the sugar phosphate cyclases superfamily. Dehydroquinate synthase family. Requires Co(2+) as cofactor. It depends on Zn(2+) as a cofactor. NAD(+) is required as a cofactor.

The protein localises to the cytoplasm. The enzyme catalyses 7-phospho-2-dehydro-3-deoxy-D-arabino-heptonate = 3-dehydroquinate + phosphate. The protein operates within metabolic intermediate biosynthesis; chorismate biosynthesis; chorismate from D-erythrose 4-phosphate and phosphoenolpyruvate: step 2/7. Catalyzes the conversion of 3-deoxy-D-arabino-heptulosonate 7-phosphate (DAHP) to dehydroquinate (DHQ). This Acinetobacter baumannii (strain AYE) protein is 3-dehydroquinate synthase.